The sequence spans 353 residues: sn-glycerol-3-phosphate import ATP-binding protein UgpC (353 aa).

One can recognise an ABC transporter domain in the interval 4 to 234 (ILLNDVRKSY…PASEFVAGFI (231 aa)). 36–43 (GPSGCGKS) provides a ligand contact to ATP.

The protein belongs to the ABC transporter superfamily. sn-glycerol-3-phosphate importer (TC 3.A.1.1.3) family. The complex is composed of two ATP-binding proteins (UgpC), two transmembrane proteins (UgpA and UgpE) and a solute-binding protein (UgpB).

Its subcellular location is the cell inner membrane. It catalyses the reaction sn-glycerol 3-phosphate(out) + ATP + H2O = sn-glycerol 3-phosphate(in) + ADP + phosphate + H(+). In terms of biological role, part of the ABC transporter complex UgpBAEC involved in sn-glycerol-3-phosphate (G3P) import. Responsible for energy coupling to the transport system. In Paracoccus denitrificans (strain Pd 1222), this protein is sn-glycerol-3-phosphate import ATP-binding protein UgpC.